Reading from the N-terminus, the 408-residue chain is Transmembrane protein 237 (408 aa).

A compositionally biased stretch (basic and acidic residues) spans 1–14 (MRTDSGARLEEGHL). The interval 1–137 (MRTDSGARLE…RRKTKKTQPA (137 aa)) is disordered. Phosphoserine is present on residues S25 and S49. Basic and acidic residues predominate over residues 60-77 (RPSEGNEPSTKELKEHPE). Positions 95-106 (TSSTQKKSSSSS) are enriched in low complexity. A run of 4 helical transmembrane segments spans residues 227–247 (MIGLFSHGFLAGCAVWNIVVI), 268–288 (LAYPFQSLLYLLLALSTISAF), 303–323 (FLALDPTALASFLYFTALILS), and 358–378 (WIVVNLVVALLVGLSWLFLSY).

This sequence belongs to the TMEM237 family. In terms of assembly, part of the tectonic-like complex (also named B9 complex). Interacts with TMEM107.

It localises to the membrane. The protein resides in the cell projection. Its subcellular location is the cilium. Its function is as follows. Component of the transition zone in primary cilia. Required for ciliogenesis. This chain is Transmembrane protein 237 (TMEM237), found in Homo sapiens (Human).